Reading from the N-terminus, the 102-residue chain is Glutaredoxin 1 (102 aa).

Positions M1 to T96 constitute a Glutaredoxin domain. Cysteines 17 and 20 form a disulfide.

It belongs to the glutaredoxin family. Monomer.

Its subcellular location is the cytoplasm. Functionally, has a glutathione-disulfide oxidoreductase activity in the presence of NADPH and glutathione reductase. Reduces low molecular weight disulfides and proteins. In Rickettsia conorii (strain ATCC VR-613 / Malish 7), this protein is Glutaredoxin 1 (grxC1).